Here is a 226-residue protein sequence, read N- to C-terminus: Cytidylate kinase (226 aa).

10 to 18 (GPASSGKST) contributes to the ATP binding site.

It is found in the cytoplasm. It carries out the reaction CMP + ATP = CDP + ADP. The catalysed reaction is dCMP + ATP = dCDP + ADP. This Streptococcus pyogenes serotype M6 (strain ATCC BAA-946 / MGAS10394) protein is Cytidylate kinase.